A 292-amino-acid chain; its full sequence is 4-diphosphocytidyl-2-C-methyl-D-erythritol kinase (292 aa).

The active site involves Lys20. 103-113 (PMGGGIGGGSS) is an ATP binding site. The active site involves Asp145.

It belongs to the GHMP kinase family. IspE subfamily.

The enzyme catalyses 4-CDP-2-C-methyl-D-erythritol + ATP = 4-CDP-2-C-methyl-D-erythritol 2-phosphate + ADP + H(+). Its pathway is isoprenoid biosynthesis; isopentenyl diphosphate biosynthesis via DXP pathway; isopentenyl diphosphate from 1-deoxy-D-xylulose 5-phosphate: step 3/6. In terms of biological role, catalyzes the phosphorylation of the position 2 hydroxy group of 4-diphosphocytidyl-2C-methyl-D-erythritol. In Cupriavidus necator (strain ATCC 17699 / DSM 428 / KCTC 22496 / NCIMB 10442 / H16 / Stanier 337) (Ralstonia eutropha), this protein is 4-diphosphocytidyl-2-C-methyl-D-erythritol kinase.